The following is a 345-amino-acid chain: MNRYQEAGVDVNAGYELVKRIKENVKSTNRPGALGGIGAFGGLFDLGELKVKHPVLVSGTDGVGTKLLIAKAMDQHDTIGIDVVAMCVNDVLAQGAEPLYFLDYIATGHNDPAKMADIVAGVAEGCRQAGAALIGGETAEMPDMYDQDEYDLAGTVTGVVEKDDLLTSDQPQAGAILLGLASSGIHSNGFSLVRQILFKDHQVDLAATPAKLGGQTVGQAVLAPTKIYVKPVLPLLKDHLVEGVAHITGGGLIENLPRMFGDDLQAQVDSSAWPSLPVFDYLKELGGLSDDDCWQTFNMGLGMILAVQPDLVDQVKSRLNQAGEACYQVGQLVNRPAGEEKIVIK.

It belongs to the AIR synthase family.

It localises to the cytoplasm. The enzyme catalyses 2-formamido-N(1)-(5-O-phospho-beta-D-ribosyl)acetamidine + ATP = 5-amino-1-(5-phospho-beta-D-ribosyl)imidazole + ADP + phosphate + H(+). Its pathway is purine metabolism; IMP biosynthesis via de novo pathway; 5-amino-1-(5-phospho-D-ribosyl)imidazole from N(2)-formyl-N(1)-(5-phospho-D-ribosyl)glycinamide: step 2/2. The protein is Phosphoribosylformylglycinamidine cyclo-ligase of Limosilactobacillus fermentum (strain NBRC 3956 / LMG 18251) (Lactobacillus fermentum).